The chain runs to 431 residues: Glutamate-1-semialdehyde 2,1-aminomutase (431 aa).

N6-(pyridoxal phosphate)lysine is present on Lys265.

This sequence belongs to the class-III pyridoxal-phosphate-dependent aminotransferase family. HemL subfamily. As to quaternary structure, homodimer. Pyridoxal 5'-phosphate is required as a cofactor.

Its subcellular location is the cytoplasm. It carries out the reaction (S)-4-amino-5-oxopentanoate = 5-aminolevulinate. It participates in porphyrin-containing compound metabolism; protoporphyrin-IX biosynthesis; 5-aminolevulinate from L-glutamyl-tRNA(Glu): step 2/2. In Aliivibrio fischeri (strain ATCC 700601 / ES114) (Vibrio fischeri), this protein is Glutamate-1-semialdehyde 2,1-aminomutase.